A 906-amino-acid chain; its full sequence is MTAVHAGNINFKWDPKSLEIRTLAVERLLEPLVTQVTTLVNTNSKGPSNKKRGRSKKAHVLAASVEQATENFLEKGDKIAKESQFLKEELVAAVEDVRKQGDLMKAAAGEFADDPCSSVKRGNMVRAARALLSAVTRLLILADMADVYKLLVQLKVVEDGILKLRNAGNEQDLGIQYKALKPEVDKLNIMAAKRQQELKDVGHRDQMAAARGILQKNVPILYTASQACLQHPDVAAYKANRDLIYKQLQQAVTGISNAAQATASDDASQHQGGGGGELAYALNNFDKQIIVDPLSFSEERFRPSLEERLESIISGAALMADSSCTRDDRRERIVAECNAVRQALQDLLSEYMGNAGRKERSDALNSAIDKMTKKTRDLRRQLRKAVMDHVSDSFLETNVPLLVLIEAAKNGNEKEVKEYAQVFREHANKLIEVANLACSISNNEEGVKLVRMSASQLEALCPQVINAALALAAKPQSKLAQENMDLFKEQWEKQVRVLTDAVDDITSIDDFLAVSENHILEDVNKCVIALQEKDVDGLDRTAGAIRGRAARVIHVVTSEMDNYEPGVYTEKVLEATKLLSNTVMPRFTEQVEAAVEALSSDPAQPMDENEFIDASRLVYDGIRDIRKAVLMIRTPEELDDSDFETEDFDVRSRTSVQTEDDQLIAGQSARAIMAQLPQEQKAKIAEQVASFQEEKSKLDAEVSKWDDSGNDIIVLAKQMCMIMMEMTDFTRGKGPLKNTSDVISAAKKIAEAGSRMDKLGRTIADHCPDSACKQDLLAYLQRIALYCHQLNICSKVKAEVQNLGGELVVSGVDSAMSLIQAAKNLMNAVVQTVKASYVASTKYQKSQGMASLNLPAVSWKMKAPEKKPLVKREKQDETQTKIKRASQKKHVNPVQALSEFKAMDSI.

The residue at position 2 (T2) is an N-acetylthreonine. An involved in homodimerization region spans residues 2–228; sequence TAVHAGNINF…PILYTASQAC (227 aa). K57 is covalently cross-linked (Glycyl lysine isopeptide (Lys-Gly) (interchain with G-Cter in SUMO2)). Residues 97-148 are interaction with JUP and CTNNB1; the sequence is VRKQGDLMKAAAGEFADDPCSSVKRGNMVRAARALLSAVTRLLILADMADVY. 4 positions are modified to phosphoserine: S264, S268, S295, and S297. The interval 325–394 is interaction with alpha-actinin; that stretch reads TRDDRRERIV…AVMDHVSDSF (70 aa). Phosphothreonine is present on T634. S641 is modified (phosphoserine; by CK2). T645 is modified (phosphothreonine). Residues S652 and S655 each carry the phosphoserine; by CK1 modification. At T658 the chain carries Phosphothreonine; by CK1. Residue K797 forms a Glycyl lysine isopeptide (Lys-Gly) (interchain with G-Cter in SUMO2) linkage. Residue S851 is modified to Phosphoserine. Residues 864-880 are compositionally biased toward basic and acidic residues; that stretch reads PEKKPLVKREKQDETQT. The segment at 864 to 894 is disordered; the sequence is PEKKPLVKREKQDETQTKIKRASQKKHVNPV. Residues 881–891 are compositionally biased toward basic residues; it reads KIKRASQKKHV.

The protein belongs to the vinculin/alpha-catenin family. Monomer and homodimer; the monomer preferentially binds to CTNNB1 and the homodimer to actin. Component of an cadherin:catenin adhesion complex composed of at least of CDH26, beta-catenin/CTNNB1, alpha-catenin/CTNNA1 and p120 catenin/CTNND1. Possible component of an E-cadherin/ catenin adhesion complex together with E-cadherin/CDH1 and beta-catenin/CTNNB1 or gamma-catenin/JUP; the complex is located to adherens junctions. The stable association of CTNNA1 is controversial as CTNNA1 was shown not to bind to F-actin when assembled in the complex. Alternatively, the CTNNA1-containing complex may be linked to F-actin by other proteins such as LIMA1. Binds AFDN and F-actin. Interacts with ARHGAP21. Interacts with AJUBA. Interacts with LIMA1. Interacts with vinculin/VCL. Interacts with TJP2/ZO2 (via N-terminus). Interacts with TJP1/ZO1 (via N-terminus). Sumoylated. In terms of processing, phosphorylation seems to contribute to the strength of cell-cell adhesion rather than to the basic capacity for cell-cell adhesion. As to expression, ubiquitously expressed in normal tissues. In terms of tissue distribution, abundantly expressed in brain and cerebellum, also expressed in the placenta, liver, lung, colon, heart, pancreas, stomach and thymus.

It localises to the cytoplasm. It is found in the cytoskeleton. The protein resides in the cell junction. The protein localises to the adherens junction. Its subcellular location is the cell membrane. It localises to the nucleus. Its function is as follows. Associates with the cytoplasmic domain of a variety of cadherins. The association of catenins to cadherins produces a complex which is linked to the actin filament network, and which seems to be of primary importance for cadherins cell-adhesion properties. Can associate with both E- and N-cadherins. Originally believed to be a stable component of E-cadherin/catenin adhesion complexes and to mediate the linkage of cadherins to the actin cytoskeleton at adherens junctions. In contrast, cortical actin was found to be much more dynamic than E-cadherin/catenin complexes and CTNNA1 was shown not to bind to F-actin when assembled in the complex suggesting a different linkage between actin and adherens junctions components. The homodimeric form may regulate actin filament assembly and inhibit actin branching by competing with the Arp2/3 complex for binding to actin filaments. Involved in the regulation of WWTR1/TAZ, YAP1 and TGFB1-dependent SMAD2 and SMAD3 nuclear accumulation. May play a crucial role in cell differentiation. The protein is Catenin alpha-1 of Homo sapiens (Human).